The sequence spans 327 residues: Pumilio homolog 18 (327 aa).

Residues 1 to 324 (MAVADNPFSM…NIANILDSFR (324 aa)) form the PUM-HD domain. 6 Pumilio repeats span residues 79 to 114 (SDSD…FCAA), 115 to 149 (ILRR…ALYE), 150 to 185 (RILY…DQLL), 186 to 222 (ELVA…NIAV), 223 to 260 (NLYG…ELLG), and 261 to 295 (CDGD…DLFW).

It localises to the cytoplasm. Functionally, sequence-specific RNA-binding protein that regulates translation and mRNA stability by binding the 3'-UTR of target mRNAs. This chain is Pumilio homolog 18 (APUM18), found in Arabidopsis thaliana (Mouse-ear cress).